Consider the following 136-residue polypeptide: Probable S-adenosyl-L-methionine-binding protein PH1056 (136 aa).

One can recognise a TsaA-like domain in the interval 8 to 126 (IVPVGYIRKE…FPERYDCPKE (119 aa)). S-adenosyl-L-methionine-binding positions include 48–49 (HK), R78, and 106–109 (EDGT).

This sequence belongs to the tRNA methyltransferase O family.

This chain is Probable S-adenosyl-L-methionine-binding protein PH1056, found in Pyrococcus horikoshii (strain ATCC 700860 / DSM 12428 / JCM 9974 / NBRC 100139 / OT-3).